We begin with the raw amino-acid sequence, 201 residues long: Probable GTP-binding protein EngB (201 aa).

The EngB-type G domain occupies 25–199 (HGIEIAFIGY…KSKLNFWYEK (175 aa)). Residues 33-40 (GYSNSGKS), 60-64 (GRTQL), 78-81 (DLPG), 145-148 (TKCD), and 178-180 (FSS) contribute to the GTP site. Mg(2+)-binding residues include Ser-40 and Thr-62.

This sequence belongs to the TRAFAC class TrmE-Era-EngA-EngB-Septin-like GTPase superfamily. EngB GTPase family. Requires Mg(2+) as cofactor.

In terms of biological role, necessary for normal cell division and for the maintenance of normal septation. In Buchnera aphidicola subsp. Schizaphis graminum (strain Sg), this protein is Probable GTP-binding protein EngB.